The chain runs to 453 residues: uncharacterized protein (453 aa).

This is an uncharacterized protein from Galliformes (FAdV-1).